Here is a 252-residue protein sequence, read N- to C-terminus: Probable phosphatase Shewana3_2794 (252 aa).

Zn(2+) is bound by residues His8, His10, His16, His41, Glu74, His102, His132, Asp193, and His195.

Belongs to the PHP family. The cofactor is Zn(2+).

The sequence is that of Probable phosphatase Shewana3_2794 from Shewanella sp. (strain ANA-3).